The sequence spans 1377 residues: DNA-directed RNA polymerase subunit beta' (1377 aa).

Positions 70, 72, 85, and 88 each coordinate Zn(2+). The Mg(2+) site is built by D460, D462, and D464. Zn(2+) is bound by residues C808, C882, C889, and C892.

The protein belongs to the RNA polymerase beta' chain family. In terms of assembly, the RNAP catalytic core consists of 2 alpha, 1 beta, 1 beta' and 1 omega subunit. When a sigma factor is associated with the core the holoenzyme is formed, which can initiate transcription. Mg(2+) serves as cofactor. The cofactor is Zn(2+).

The enzyme catalyses RNA(n) + a ribonucleoside 5'-triphosphate = RNA(n+1) + diphosphate. DNA-dependent RNA polymerase catalyzes the transcription of DNA into RNA using the four ribonucleoside triphosphates as substrates. The polypeptide is DNA-directed RNA polymerase subunit beta' (Geotalea uraniireducens (strain Rf4) (Geobacter uraniireducens)).